A 272-amino-acid polypeptide reads, in one-letter code: Indole-3-glycerol phosphate synthase (272 aa).

This sequence belongs to the TrpC family.

It catalyses the reaction 1-(2-carboxyphenylamino)-1-deoxy-D-ribulose 5-phosphate + H(+) = (1S,2R)-1-C-(indol-3-yl)glycerol 3-phosphate + CO2 + H2O. Its pathway is amino-acid biosynthesis; L-tryptophan biosynthesis; L-tryptophan from chorismate: step 4/5. This chain is Indole-3-glycerol phosphate synthase, found in Arthrobacter sp. (strain FB24).